The sequence spans 230 residues: Cytidylate kinase (230 aa).

An ATP-binding site is contributed by Gly12 to Thr20.

Belongs to the cytidylate kinase family. Type 1 subfamily.

The protein resides in the cytoplasm. The catalysed reaction is CMP + ATP = CDP + ADP. The enzyme catalyses dCMP + ATP = dCDP + ADP. The polypeptide is Cytidylate kinase (Shewanella pealeana (strain ATCC 700345 / ANG-SQ1)).